A 37-amino-acid polypeptide reads, in one-letter code: Omega/M-ectatotoxin-Et1a subunit A (37 aa).

Cys12 and Cys34 are joined by a disulfide.

The protein belongs to the ectatomin family. Ectatomin-Et subfamily. In terms of assembly, heterodimer of an A and a B chain; disulfide-linked. As to expression, expressed by the venom gland.

It is found in the secreted. The protein resides in the target cell membrane. Its function is as follows. Algogenic for animals, human and insects. At high concentrations (0.5-1 uM), it acts as a pore-forming protein that forms nonselective cation channels both in cell and artificial membranes. It is weakly selective for cation over anions channel conductance is identical in both directions. At lower concentrations (1-10 nM), this heterodimer inhibits cardiac L-type calcium currents in isolated rat cardiac ventricular myocytes. This Ectatomma tuberculatum (Selva ant) protein is Omega/M-ectatotoxin-Et1a subunit A.